A 313-amino-acid polypeptide reads, in one-letter code: Olfactory receptor 5H1 (313 aa).

Over 1–28 (MEEENATLLTEFVLTGFLYQPQWKIPLF) the chain is Extracellular. N5 carries N-linked (GlcNAc...) asparagine glycosylation. The chain crosses the membrane as a helical span at residues 29–49 (LAFLVIYLITIMGNLGLIAVI). Over 50–56 (WKDPHLH) the chain is Cytoplasmic. A helical membrane pass occupies residues 57–77 (IPMYLLLGNLAFVDAWISSTV). Residues 78–98 (TPKMLNNFLAKSKMISLSECK) lie on the Extracellular side of the membrane. The cysteines at positions 97 and 179 are disulfide-linked. Residues 99–119 (IQFFSFAISVTTECFLLATMA) traverse the membrane as a helical segment. Residues 120 to 143 (YDRYVAICKPLLYPAIMTNGLCIR) are Cytoplasmic-facing. A helical transmembrane segment spans residues 144-164 (LLILSYVGGILHALIHEGFLF). At 165–195 (RLTFCNSNIVHHIYCDTIPLSKISCTDSSIN) the chain is on the extracellular side. Residues 196–216 (FLMVFIFSGSIQVFSIVTILV) traverse the membrane as a helical segment. Residues 217-240 (SYTFVLFAILKKKSDKGVRKAFST) are Cytoplasmic-facing. A helical membrane pass occupies residues 241–261 (CGAHLFSVSLYYGPLLFIYVG). Residues 262-271 (PASPQADDQD) lie on the Extracellular side of the membrane. The helical transmembrane segment at 272 to 292 (MVEPLFYTVIIPLLNPIIYSL) threads the bilayer. The Cytoplasmic portion of the chain corresponds to 293–313 (RNKQVTVSFTKMLKKHVKVSY).

It belongs to the G-protein coupled receptor 1 family.

It localises to the cell membrane. In terms of biological role, odorant receptor. The chain is Olfactory receptor 5H1 (OR5H1) from Homo sapiens (Human).